A 503-amino-acid chain; its full sequence is Zinc finger protein JACKDAW (503 aa).

Positions 32-51 (IPDLNPNSNPNPNAKPNSSS) are enriched in low complexity. Residues 32–68 (IPDLNPNSNPNPNAKPNSSSAKKKRNQPGTPDPDADV) are disordered. Residue Ser-72 is modified to Phosphoserine. 2 consecutive C2H2-type zinc fingers follow at residues 82–104 (FVCEICNKGFQRDQNLQLHRRGH) and 124–154 (YICPIKTCVHHDASRALGDLTGIKKHYSRKH). Short sequence motifs (nuclear localization signal) lie at residues 100 to 107 (HRRGHNLP) and 146 to 153 (IKKHYSRK). The C2H2-type 2; degenerate zinc finger occupies 159-182 (WKCEKCSKKYAVQSDWKAHAKTCG). Cys-161, Cys-164, His-177, Cys-181, Cys-188, Cys-190, His-203, and Cys-207 together coordinate Zn(2+). Residues 186–209 (YKCDCGTLFSRKDSFITHRAFCDA) form a CCHC-type 2; atypical zinc finger. The tract at residues 196–208 (RKDSFITHRAFCD) is SHR-binding. 2 disordered regions span residues 301–417 (SSSS…SSPM) and 432–465 (RENHNRAPPPLSGVSTSSVDNNPFQSNRSGLNPA). Low complexity predominate over residues 319-358 (TSTNPSLTLSSSSTSQQTSASLQHQTLKDSSFSPLFSSSS). Positions 381-392 (MGSTRSNSSTAP) are enriched in polar residues. Residues 396-407 (AGPTMTSSSATA) are compositionally biased toward low complexity. The segment covering 444–465 (GVSTSSVDNNPFQSNRSGLNPA) has biased composition (polar residues).

Interacts with SHR, SCR, MGP and itself. The heterodimer with SHR involves its zinc fingers. Interacts with SIEL. Binds to RGA and SCL3 competitively in the nucleus. Expressed in the quiescent center, the ground tissue stem cells and to a lesser extent in mature cortex and endodermis cells.

The protein resides in the nucleus. In terms of biological role, transcription factor that, together with BIB, regulates tissue boundaries and asymmetric cell division by a rapid up-regulation of 'SCARECROW' (SCR), thus controlling the nuclear localization of 'SHORT-ROOT' (SHR) and restricting its action. Binds DNA via its zinc fingers. Recognizes and binds to SCL3 promoter sequence 5'-AGACAA-3' to promote its expression when in complex with RGA. Confines CYCD6 expression to the cortex-endodermis initial/daughter (CEI/CEID) tissues. Required for radial patterning and stem cell maintenance. Counteracted by 'MAGPIE' (MGP). Binds to the SCR and MGP promoter sequences. Controls position-dependent signals that regulate epidermal-cell-type patterning. This is Zinc finger protein JACKDAW from Arabidopsis thaliana (Mouse-ear cress).